A 326-amino-acid polypeptide reads, in one-letter code: Autophagy protein 5 (326 aa).

Residue Lys163 forms a Glycyl lysine isopeptide (Lys-Gly) (interchain with G-Cter in atg12) linkage.

Belongs to the ATG5 family. In terms of assembly, conjugated with atg12. Conjugated to atg12; which is essential for autophagy.

The protein resides in the preautophagosomal structure membrane. Its function is as follows. Involved in cytoplasm to vacuole transport (Cvt) and autophagic vesicle formation. Autophagy is essential for maintenance of amino acid levels and protein synthesis under nitrogen starvation. Required for selective autophagic degradation of the nucleus (nucleophagy). Also required for mitophagy, which eliminates defective or superfluous mitochondria in order to fulfill cellular energy requirements and prevent excess ROS production. Conjugation with atg12, through a ubiquitin-like conjugating system involving atg7 as an E1-like activating enzyme and atg10 as an E2-like conjugating enzyme, is essential for its function. The atg12-atg5 conjugate acts as an E3-like enzyme which is required for lipidation of atg8 and atg8 association to the vesicle membranes. The polypeptide is Autophagy protein 5 (atg5) (Aspergillus fumigatus (strain ATCC MYA-4609 / CBS 101355 / FGSC A1100 / Af293) (Neosartorya fumigata)).